We begin with the raw amino-acid sequence, 229 residues long: MAKLTKKMKAIKAGVDSTKAYEINEAIAVLKQFATAKFVESVDVAVNLGIDPRKSDQNVRGATVLPHGTGRTARVAVFTQGANAEAAKAAGADLVGMEDLAEQIKKGEMNFDVVIASPDAMRVVGQLGQVLGPRGLMPNPKVGTVTPNVAEAVKNAKSGQIRYRNDKNGIIHTTIGKADFAPEQLKDNLVALLAALNKAKPTTAKGIFIKKVSISTTMGAGVAVDQASL.

This sequence belongs to the universal ribosomal protein uL1 family. In terms of assembly, part of the 50S ribosomal subunit.

Binds directly to 23S rRNA. The L1 stalk is quite mobile in the ribosome, and is involved in E site tRNA release. Functionally, protein L1 is also a translational repressor protein, it controls the translation of the L11 operon by binding to its mRNA. The chain is Large ribosomal subunit protein uL1 from Actinobacillus pleuropneumoniae serotype 5b (strain L20).